Here is a 592-residue protein sequence, read N- to C-terminus: MRQFTHGTLLAILALANTISAIPSFSANNYPAHPAEPLALFAQSQPQAPLGLWTRLRNSVIERLWGVPPQQRNHRGGNKQYPFYSAPASLQARYSDDVVLRFRLQTADEVKALVEASNILFLDVWASTDEWVDIRLAKDVVPSLLGLLPKSLQTAHVPLIHDLPQTVYESYPSSSQRPTDNGRGFLPSRESSSDVTNIFFEDYQPLSVIGPWMRLLASMFPSHVQLISIGSSFEGRDIPALRVGVRPANDPKPRKTVIIGGGSHAREWIGVSTVNYVAYSLITTYGKSTPISTLLEQFDFIFIPTINPDGYVHTWETDRLWRKNRQETSLPFCPGVDLDRTWGFEWNGNATGDNPCSESYGGDEPFAGTEARQLAGWVKEQTEQHNVKFVAYLDLHSYSQQVLYPYSYSCLPRPPNLENLEELAMGIAKAIRLTNRQSYTVSSACQGFTASQKKVKLDTFPRMESTGGSALDWFYNDVGVKYSYQLKLRDKGSYGFLLPRENIVPTGKEVFNAVMVLAKFLLGSDGFEGLNWEAEFQRLNEADKPILDDGDDDEEEDGQDKKDDSWIPDEYKNDNDHDDDDDGWGLRRRRKR.

Positions 1–21 (MRQFTHGTLLAILALANTISA) are cleaved as a signal peptide. Residues 22-174 (IPSFSANNYP…QTVYESYPSS (153 aa)) constitute a propeptide that is removed on maturation. The segment covering 170–179 (SYPSSSQRPT) has biased composition (polar residues). Positions 170–191 (SYPSSSQRPTDNGRGFLPSRES) are disordered. The 320-residue stretch at 202-521 (DYQPLSVIGP…NAVMVLAKFL (320 aa)) folds into the Peptidase M14 domain. Residues H264 and E267 each contribute to the Zn(2+) site. Substrate-binding positions include 264 to 267 (HARE), R322, and 339 to 340 (DR). C333 and C356 are oxidised to a cystine. Residue N349 is glycosylated (N-linked (GlcNAc...) asparagine). H396 is a binding site for Zn(2+). 397–398 (SY) serves as a coordination point for substrate. A disordered region spans residues 542–592 (ADKPILDDGDDDEEEDGQDKKDDSWIPDEYKNDNDHDDDDDGWGLRRRRKR). A compositionally biased stretch (acidic residues) spans 548–558 (DDGDDDEEEDG). Residues 559–575 (QDKKDDSWIPDEYKNDN) are compositionally biased toward basic and acidic residues.

It belongs to the peptidase M14 family. It depends on Zn(2+) as a cofactor.

The protein resides in the vacuole. It localises to the secreted. In terms of biological role, inactive carboxypeptidase that may play a role in cell wall organization and biogenesis. The sequence is that of Inactive metallocarboxypeptidase ECM14 (ECM14) from Ajellomyces dermatitidis (strain ER-3 / ATCC MYA-2586) (Blastomyces dermatitidis).